A 39-amino-acid polypeptide reads, in one-letter code: Larval cuticle protein SC6 (39 aa).

The region spanning 15–39 is the Chitin-binding type R&amp;R domain; that stretch reads VDQFKYGLELDNSIKADQEGHLEGD.

Functionally, component of the cuticle of the larva of flesh fly. The protein is Larval cuticle protein SC6 of Sarcophaga bullata (Grey flesh fly).